A 393-amino-acid polypeptide reads, in one-letter code: Sugar efflux transporter B (393 aa).

12 helical membrane-spanning segments follow: residues phenylalanine 13–leucine 33, methionine 52–alanine 72, leucine 84–tryptophan 101, tyrosine 105–proline 124, valine 152–phenylalanine 172, valine 174–leucine 194, leucine 219–methionine 239, leucine 253–glycine 273, leucine 283–histidine 303, leucine 308–leucine 328, leucine 344–alanine 364, and isoleucine 366–cysteine 386.

Belongs to the major facilitator superfamily. Set transporter family.

Its subcellular location is the cell inner membrane. Involved in the efflux of sugars. The physiological role may be the detoxification of non-metabolizable sugar analogs. Can transport lactose and glucose. This chain is Sugar efflux transporter B (setB), found in Salmonella typhimurium (strain LT2 / SGSC1412 / ATCC 700720).